The sequence spans 304 residues: Acetyl-coenzyme A carboxylase carboxyl transferase subunit beta (304 aa).

The region spanning 23–292 (VWTKCDSCGQ…PNPDAPREGV (270 aa)) is the CoA carboxyltransferase N-terminal domain. Residues cysteine 27, cysteine 30, cysteine 46, and cysteine 49 each contribute to the Zn(2+) site. A C4-type zinc finger spans residues 27–49 (CDSCGQVLYRAELERNLEVCPKC). Positions 284–304 (NPDAPREGVVVPPAPGQESEA) are disordered.

Belongs to the AccD/PCCB family. Acetyl-CoA carboxylase is a heterohexamer composed of biotin carboxyl carrier protein (AccB), biotin carboxylase (AccC) and two subunits each of ACCase subunit alpha (AccA) and ACCase subunit beta (AccD). It depends on Zn(2+) as a cofactor.

The protein localises to the cytoplasm. The catalysed reaction is N(6)-carboxybiotinyl-L-lysyl-[protein] + acetyl-CoA = N(6)-biotinyl-L-lysyl-[protein] + malonyl-CoA. Its pathway is lipid metabolism; malonyl-CoA biosynthesis; malonyl-CoA from acetyl-CoA: step 1/1. In terms of biological role, component of the acetyl coenzyme A carboxylase (ACC) complex. Biotin carboxylase (BC) catalyzes the carboxylation of biotin on its carrier protein (BCCP) and then the CO(2) group is transferred by the transcarboxylase to acetyl-CoA to form malonyl-CoA. This Salmonella arizonae (strain ATCC BAA-731 / CDC346-86 / RSK2980) protein is Acetyl-coenzyme A carboxylase carboxyl transferase subunit beta.